A 122-amino-acid chain; its full sequence is Large ribosomal subunit protein bL12 (122 aa).

Belongs to the bacterial ribosomal protein bL12 family. Homodimer. Part of the ribosomal stalk of the 50S ribosomal subunit. Forms a multimeric L10(L12)X complex, where L10 forms an elongated spine to which 2 to 4 L12 dimers bind in a sequential fashion. Binds GTP-bound translation factors.

In terms of biological role, forms part of the ribosomal stalk which helps the ribosome interact with GTP-bound translation factors. Is thus essential for accurate translation. In Staphylococcus epidermidis (strain ATCC 35984 / DSM 28319 / BCRC 17069 / CCUG 31568 / BM 3577 / RP62A), this protein is Large ribosomal subunit protein bL12.